The sequence spans 309 residues: uncharacterized protein (309 aa).

3 Solcar repeats span residues 6–83 (SDLY…LCHS), 97–211 (LTGY…FKRL), and 216–302 (NDKA…VSLL). Transmembrane regions (helical) follow at residues 12–32 (ITAGSVAAVFQTTMTYPFEYL), 47–67 (IILPQIKSYFVGCSALNVAAF), 100–120 (YNLLIAGTLTGIVESLFIIPF), 184–204 (VQGTTATIFRQIANTSIQFTA), 222–242 (VITGLATSFTLVAMTQPIDVV), and 285–305 (VGISGGLTFTVYEQVSLLLGF).

It belongs to the mitochondrial carrier (TC 2.A.29) family.

The protein resides in the mitochondrion inner membrane. This is an uncharacterized protein from Saccharomyces cerevisiae (strain ATCC 204508 / S288c) (Baker's yeast).